The following is a 502-amino-acid chain: Probable cytosol aminopeptidase (502 aa).

Mn(2+) is bound by residues Lys-270 and Asp-275. Residue Lys-282 is part of the active site. Residues Asp-293, Asp-352, and Glu-354 each contribute to the Mn(2+) site. The active site involves Arg-356.

This sequence belongs to the peptidase M17 family. It depends on Mn(2+) as a cofactor.

The protein resides in the cytoplasm. It catalyses the reaction Release of an N-terminal amino acid, Xaa-|-Yaa-, in which Xaa is preferably Leu, but may be other amino acids including Pro although not Arg or Lys, and Yaa may be Pro. Amino acid amides and methyl esters are also readily hydrolyzed, but rates on arylamides are exceedingly low.. The catalysed reaction is Release of an N-terminal amino acid, preferentially leucine, but not glutamic or aspartic acids.. Its function is as follows. Presumably involved in the processing and regular turnover of intracellular proteins. Catalyzes the removal of unsubstituted N-terminal amino acids from various peptides. This Buchnera aphidicola subsp. Schizaphis graminum (strain Sg) protein is Probable cytosol aminopeptidase.